We begin with the raw amino-acid sequence, 1906 residues long: Alpha-2-macroglobulin homolog (1906 aa).

Residues 1-21 (MIIRVCIRCFIVLTLVLGIGG) form the signal peptide. Residue cysteine 22 is the site of N-palmitoyl cysteine attachment. Cysteine 22 carries S-diacylglycerol cysteine lipidation.

The protein belongs to the protease inhibitor I39 (alpha-2-macroglobulin) family. Bacterial alpha-2-macroglobulin subfamily.

The protein resides in the cell membrane. The polypeptide is Alpha-2-macroglobulin homolog (Nostoc sp. (strain PCC 7120 / SAG 25.82 / UTEX 2576)).